The chain runs to 257 residues: Trans-aconitate 2-methyltransferase (257 aa).

This sequence belongs to the methyltransferase superfamily. Tam family.

Its subcellular location is the cytoplasm. It carries out the reaction trans-aconitate + S-adenosyl-L-methionine = (E)-3-(methoxycarbonyl)pent-2-enedioate + S-adenosyl-L-homocysteine. Its function is as follows. Catalyzes the S-adenosylmethionine monomethyl esterification of trans-aconitate. In Sinorhizobium fredii (strain NBRC 101917 / NGR234), this protein is Trans-aconitate 2-methyltransferase.